The following is a 257-amino-acid chain: Probable ABC transporter arginine-binding protein ArtJ (257 aa).

Residues 1-23 (MCIKRKKTWIAFLAVVCSFCLTG) form the signal peptide. The L-arginine site is built by N41, E48, G100, S102, R107, and Y151.

The protein belongs to the bacterial solute-binding protein 3 family.

Its subcellular location is the secreted. It localises to the cell surface. In terms of biological role, probably part of an ABC transporter complex involved in arginine transport. Binds arginine. Interacts with host epithelial cells, suggesting a role in host-cell adhesion during infection. The sequence is that of Probable ABC transporter arginine-binding protein ArtJ from Chlamydia trachomatis serovar D (strain ATCC VR-885 / DSM 19411 / UW-3/Cx).